Here is a 686-residue protein sequence, read N- to C-terminus: 3',5'-cyclic-AMP phosphodiesterase 4C (686 aa).

4 positions are modified to phosphoserine: Ser9, Ser28, Ser40, and Ser83. 2 disordered regions span residues 88–116 (NGLPGGKGLLDAQSGPSLGRALQPPVHHV) and 124–143 (YRSDSDHEPSPKAVSRTSSA). Residues 124-133 (YRSDSDHEPS) show a composition bias toward basic and acidic residues. The PDEase domain maps to 313 to 642 (VQTDQEEQLA…EWYQSRIPCS (330 aa)). The Proton donor role is filled by His389. His389 provides a ligand contact to 3',5'-cyclic AMP. 2 residues coordinate AMP: His389 and His393. Zn(2+) is bound by residues His393, His429, Asp430, and Asp547. Residues Asp430, Asp547, Gln598, and Phe601 each coordinate AMP. Asp430 contacts Mg(2+). Asp430 is a Mn(2+) binding site. The 3',5'-cyclic AMP site is built by Gln598 and Phe601. At Ser642 the chain carries Phosphoserine. Residues 660–671 (EAEEEEEEEDEG) are compositionally biased toward acidic residues. Positions 660–686 (EAEEEEEEEDEGQCTALNRESSELPST) are disordered. Over residues 674-686 (TALNRESSELPST) the composition is skewed to polar residues.

Belongs to the cyclic nucleotide phosphodiesterase family. PDE4 subfamily. As to quaternary structure, part of a complex containing AKAP5, ADCY5, ADCY6 and PKD2. Zn(2+) is required as a cofactor. It depends on Mg(2+) as a cofactor. Mn(2+) serves as cofactor.

It localises to the cell projection. The protein localises to the cilium. The catalysed reaction is 3',5'-cyclic AMP + H2O = AMP + H(+). It participates in purine metabolism; 3',5'-cyclic AMP degradation; AMP from 3',5'-cyclic AMP: step 1/1. Hydrolyzes the second messenger cAMP, which is a key regulator of many important physiological processes. This is 3',5'-cyclic-AMP phosphodiesterase 4C from Mus musculus (Mouse).